The following is a 588-amino-acid chain: ATP-dependent lipid A-core flippase (588 aa).

The next 6 membrane-spanning stretches (helical) occupy residues 23–43 (FWPV…IDAG), 56–76 (FITI…IGIT), 141–161 (DALT…TVMM), 162–182 (VICW…GIIV), 257–277 (LVIA…STVI), and 278–298 (TISA…IKPM). The ABC transmembrane type-1 domain occupies 28-310 (LLGVLANILY…LTTLNATIQR (283 aa)). The region spanning 342-576 (IEFKHVYHAY…DGHYAQLYKV (235 aa)) is the ABC transporter domain. 375 to 382 (GHSGSGKT) contributes to the ATP binding site.

The protein belongs to the ABC transporter superfamily. Lipid exporter (TC 3.A.1.106) family. As to quaternary structure, homodimer.

It is found in the cell inner membrane. The enzyme catalyses ATP + H2O + lipid A-core oligosaccharideSide 1 = ADP + phosphate + lipid A-core oligosaccharideSide 2.. Involved in lipopolysaccharide (LPS) biosynthesis. Translocates lipid A-core from the inner to the outer leaflet of the inner membrane. Transmembrane domains (TMD) form a pore in the inner membrane and the ATP-binding domain (NBD) is responsible for energy generation. In Legionella pneumophila subsp. pneumophila (strain Philadelphia 1 / ATCC 33152 / DSM 7513), this protein is ATP-dependent lipid A-core flippase.